Reading from the N-terminus, the 474-residue chain is Glycogen synthase (474 aa).

ADP-alpha-D-glucose is bound at residue Lys15.

It belongs to the glycosyltransferase 1 family. Bacterial/plant glycogen synthase subfamily.

The enzyme catalyses [(1-&gt;4)-alpha-D-glucosyl](n) + ADP-alpha-D-glucose = [(1-&gt;4)-alpha-D-glucosyl](n+1) + ADP + H(+). The protein operates within glycan biosynthesis; glycogen biosynthesis. Synthesizes alpha-1,4-glucan chains using ADP-glucose. The chain is Glycogen synthase from Chlamydia trachomatis serovar A (strain ATCC VR-571B / DSM 19440 / HAR-13).